The sequence spans 66 residues: Prophage transcriptional regulatory protein (66 aa).

The polypeptide is Prophage transcriptional regulatory protein (croE) (Escherichia coli (strain K12)).